The sequence spans 458 residues: Dynein regulatory complex protein 10 (458 aa).

Coiled-coil stretches lie at residues 96 to 137 (GQTL…HKVN), 209 to 255 (IQDI…KNHL), and 285 to 379 (QVRL…IRAE). One can recognise an IQ domain in the interval 397 to 426 (MVRAATLIQAVWKGYLVRSILRSKKKKRGK). The interval 419 to 458 (SKKKKRGKGKGKDKGKGKEKPKEEKAKEKKPKAKGKGKKK) is disordered. The span at 428–445 (KGKDKGKGKEKPKEEKAK) shows a compositional bias: basic and acidic residues. Residues 446–458 (EKKPKAKGKGKKK) show a composition bias toward basic residues.

Belongs to the DRC10 family. As to quaternary structure, component of the nexin-dynein regulatory complex (N-DRC). Interacts with CFAP52.

It localises to the cytoplasm. Its subcellular location is the cytoskeleton. The protein localises to the flagellum axoneme. In terms of biological role, component of the nexin-dynein regulatory complex (N-DRC), a key regulator of ciliary/flagellar motility which maintains the alignment and integrity of the distal axoneme and regulates microtubule sliding in motile axonemes. In Mus musculus (Mouse), this protein is Dynein regulatory complex protein 10 (Iqcd).